The following is a 365-amino-acid chain: Delta(7)-sterol 5(6)-desaturase ERG3 (365 aa).

Topologically, residues 1–92 (MDLVLEVADH…LLPRSSILRE (92 aa)) are cytoplasmic. The chain crosses the membrane as a helical span at residues 93–113 (FLSLWVIVTIFGLLLYLFTAS). The Lumenal segment spans residues 114–140 (LSYVFVFDKSIFNHPRYLKNQMAMEIK). Residues 141-161 (LAVSAIPWMSMLTVPWFVMEL) traverse the membrane as a helical segment. Over 162 to 242 (NGHSKLYMKI…VDGFLQSISY (81 aa)) the chain is Cytoplasmic. In terms of domain architecture, Fatty acid hydroxylase spans 187–311 (TFIFFTDCGV…FTTLWDRLGG (125 aa)). A Histidine box-1 motif is present at residues 200-204 (HRWLH). Residues 213–217 (HKPHH) carry the Histidine box-2 motif. Residues 243-263 (HIYPLILPLHKVSYLILFTFV) form a helical membrane-spanning segment. Residues 264–365 (NFWTVMIHDG…ENDPNTKKNN (102 aa)) lie on the Lumenal side of the membrane. The Histidine box-3 motif lies at 288-292 (HTVHH). Residues Lys324 and Lys344 each participate in a glycyl lysine isopeptide (Lys-Gly) (interchain with G-Cter in ubiquitin) cross-link.

This sequence belongs to the sterol desaturase family. As to quaternary structure, interacts with ERG28. Fe cation serves as cofactor.

The protein resides in the endoplasmic reticulum membrane. It catalyses the reaction episterol + 2 Fe(II)-[cytochrome b5] + O2 + 2 H(+) = 5-dehydroepisterol + 2 Fe(III)-[cytochrome b5] + 2 H2O. Its pathway is steroid metabolism; ergosterol biosynthesis; ergosterol from zymosterol: step 3/5. Functionally, C-5 sterol desaturase; part of the third module of ergosterol biosynthesis pathway that includes the late steps of the pathway. ERG3 catalyzes the introduction of a C-5 double bond in the B ring to produce 5-dehydroepisterol. The third module or late pathway involves the ergosterol synthesis itself through consecutive reactions that mainly occur in the endoplasmic reticulum (ER) membrane. Firstly, the squalene synthase ERG9 catalyzes the condensation of 2 farnesyl pyrophosphate moieties to form squalene, which is the precursor of all steroids. Squalene synthase is crucial for balancing the incorporation of farnesyl diphosphate (FPP) into sterol and nonsterol isoprene synthesis. Secondly, the squalene epoxidase ERG1 catalyzes the stereospecific oxidation of squalene to (S)-2,3-epoxysqualene, which is considered to be a rate-limiting enzyme in steroid biosynthesis. Then, the lanosterol synthase ERG7 catalyzes the cyclization of (S)-2,3 oxidosqualene to lanosterol, a reaction that forms the sterol core. In the next steps, lanosterol is transformed to zymosterol through a complex process involving various demethylation, reduction and desaturation reactions. The lanosterol 14-alpha-demethylase ERG11 (also known as CYP51) catalyzes C14-demethylation of lanosterol to produce 4,4'-dimethyl cholesta-8,14,24-triene-3-beta-ol, which is critical for ergosterol biosynthesis. The C-14 reductase ERG24 reduces the C14=C15 double bond of 4,4-dimethyl-cholesta-8,14,24-trienol to produce 4,4-dimethyl-cholesta-8,24-dienol. 4,4-dimethyl-cholesta-8,24-dienol is substrate of the C-4 demethylation complex ERG25-ERG26-ERG27 in which ERG25 catalyzes the three-step monooxygenation required for the demethylation of 4,4-dimethyl and 4alpha-methylsterols, ERG26 catalyzes the oxidative decarboxylation that results in a reduction of the 3-beta-hydroxy group at the C-3 carbon to an oxo group, and ERG27 is responsible for the reduction of the keto group on the C-3. ERG28 has a role as a scaffold to help anchor ERG25, ERG26 and ERG27 to the endoplasmic reticulum and ERG29 regulates the activity of the iron-containing C4-methylsterol oxidase ERG25. Then, the sterol 24-C-methyltransferase ERG6 catalyzes the methyl transfer from S-adenosyl-methionine to the C-24 of zymosterol to form fecosterol. The C-8 sterol isomerase ERG2 catalyzes the reaction which results in unsaturation at C-7 in the B ring of sterols and thus converts fecosterol to episterol. The sterol-C5-desaturase ERG3 then catalyzes the introduction of a C-5 double bond in the B ring to produce 5-dehydroepisterol. The C-22 sterol desaturase ERG5 further converts 5-dehydroepisterol into ergosta-5,7,22,24(28)-tetraen-3beta-ol by forming the C-22(23) double bond in the sterol side chain. Finally, ergosta-5,7,22,24(28)-tetraen-3beta-ol is substrate of the C-24(28) sterol reductase ERG4 to produce ergosterol. The protein is Delta(7)-sterol 5(6)-desaturase ERG3 of Saccharomyces cerevisiae (strain ATCC 204508 / S288c) (Baker's yeast).